The following is a 157-amino-acid chain: Crossover junction endodeoxyribonuclease RuvC (157 aa).

Catalysis depends on residues Asp-7, Glu-67, and Asp-140. Mg(2+) contacts are provided by Asp-7, Glu-67, and Asp-140.

Belongs to the RuvC family. As to quaternary structure, homodimer which binds Holliday junction (HJ) DNA. The HJ becomes 2-fold symmetrical on binding to RuvC with unstacked arms; it has a different conformation from HJ DNA in complex with RuvA. In the full resolvosome a probable DNA-RuvA(4)-RuvB(12)-RuvC(2) complex forms which resolves the HJ. It depends on Mg(2+) as a cofactor.

Its subcellular location is the cytoplasm. The enzyme catalyses Endonucleolytic cleavage at a junction such as a reciprocal single-stranded crossover between two homologous DNA duplexes (Holliday junction).. The RuvA-RuvB-RuvC complex processes Holliday junction (HJ) DNA during genetic recombination and DNA repair. Endonuclease that resolves HJ intermediates. Cleaves cruciform DNA by making single-stranded nicks across the HJ at symmetrical positions within the homologous arms, yielding a 5'-phosphate and a 3'-hydroxyl group; requires a central core of homology in the junction. The consensus cleavage sequence is 5'-(A/T)TT(C/G)-3'. Cleavage occurs on the 3'-side of the TT dinucleotide at the point of strand exchange. HJ branch migration catalyzed by RuvA-RuvB allows RuvC to scan DNA until it finds its consensus sequence, where it cleaves and resolves the cruciform DNA. This is Crossover junction endodeoxyribonuclease RuvC from Rickettsia africae (strain ESF-5).